A 614-amino-acid polypeptide reads, in one-letter code: Allergen Ara h 1, clone P17 (614 aa).

A signal peptide spans 1 to 25 (MRGRVSPLMLLLGILVLASVSATQA). Disordered stretches follow at residues 72-177 (DTGA…RRFS), 334-356 (NAGG…DNEG), 372-397 (HAKS…DGEP), and 464-491 (KEQQ…SNRE). Residues 81 to 132 (PPGERTRGRQPGDYDDDRRQPRREEGGRWGPAEPREREREEDWRQPREDWRR) are compositionally biased toward basic and acidic residues. The region spanning 169–327 (FYFPSRRFST…AFNAEFNEIR (159 aa)) is the Cupin type-1 1 domain. Residues 390 to 566 (INLRDGEPDL…AFPGSGEQVE (177 aa)) form the Cupin type-1 2 domain. The span at 464-474 (KEQQQRGRREQ) shows a compositional bias: basic and acidic residues. The span at 475 to 486 (EWEEEEEDEEEE) shows a compositional bias: acidic residues. The N-linked (GlcNAc...) asparagine glycan is linked to N516. The interval 572 to 614 (QRESHFVSARPQSQSPSSPEKEDQEEENQGGKGPLLSILKAFN) is disordered.

It belongs to the 7S seed storage protein family.

This Arachis hypogaea (Peanut) protein is Allergen Ara h 1, clone P17.